Reading from the N-terminus, the 95-residue chain is TBK1 inhibitor DP96R (95 aa).

This sequence belongs to the asfivirus DP96R family.

Functionally, inhibits cGAS-STING-mediated type I IFN expression and NF-kB activation by inhibiting TBK1 and IKBKB/IKKB. Inhibits host TBK1 phosphorylation. The chain is TBK1 inhibitor DP96R from Ornithodoros (relapsing fever ticks).